The sequence spans 315 residues: Oxalate oxidoreductase subunit delta (315 aa).

4Fe-4S ferredoxin-type domains are found at residues 252–280 (QRPI…TRTE) and 281–310 (EGPV…NVPE). [4Fe-4S] cluster is bound by residues C261, C264, C267, C271, C290, C293, C296, and C300.

As to quaternary structure, dimer of heterotrimer of one alpha, one beta and one delta subunit. The cofactor is [4Fe-4S] cluster.

It carries out the reaction oxidized 2[4Fe-4S]-[ferredoxin] + oxalate = reduced 2[4Fe-4S]-[ferredoxin] + 2 CO2. Catalyzes the anaerobic oxidation of oxalate using a broad range of electron acceptors, including ferredoxin and the nickel-dependent carbon monoxide dehydrogenase. Does not require coenzyme A as cosubstrate. Enables anaerobic growth on oxalate which is used as energy source by the bacteria. This chain is Oxalate oxidoreductase subunit delta, found in Moorella thermoacetica (strain ATCC 39073 / JCM 9320).